The primary structure comprises 179 residues: Large ribosomal subunit protein uL5 (179 aa).

The protein belongs to the universal ribosomal protein uL5 family. In terms of assembly, part of the 50S ribosomal subunit; part of the 5S rRNA/L5/L18/L25 subcomplex. Contacts the 5S rRNA and the P site tRNA. Forms a bridge to the 30S subunit in the 70S ribosome.

Functionally, this is one of the proteins that bind and probably mediate the attachment of the 5S RNA into the large ribosomal subunit, where it forms part of the central protuberance. In the 70S ribosome it contacts protein S13 of the 30S subunit (bridge B1b), connecting the 2 subunits; this bridge is implicated in subunit movement. Contacts the P site tRNA; the 5S rRNA and some of its associated proteins might help stabilize positioning of ribosome-bound tRNAs. This chain is Large ribosomal subunit protein uL5, found in Citrifermentans bemidjiense (strain ATCC BAA-1014 / DSM 16622 / JCM 12645 / Bem) (Geobacter bemidjiensis).